The primary structure comprises 213 residues: Probable nicotinate-nucleotide adenylyltransferase (213 aa).

It belongs to the NadD family.

The enzyme catalyses nicotinate beta-D-ribonucleotide + ATP + H(+) = deamido-NAD(+) + diphosphate. It participates in cofactor biosynthesis; NAD(+) biosynthesis; deamido-NAD(+) from nicotinate D-ribonucleotide: step 1/1. Its function is as follows. Catalyzes the reversible adenylation of nicotinate mononucleotide (NaMN) to nicotinic acid adenine dinucleotide (NaAD). In Trichlorobacter lovleyi (strain ATCC BAA-1151 / DSM 17278 / SZ) (Geobacter lovleyi), this protein is Probable nicotinate-nucleotide adenylyltransferase.